We begin with the raw amino-acid sequence, 554 residues long: Glucose-6-phosphate isomerase (554 aa).

E359 serves as the catalytic Proton donor. Active-site residues include H390 and K518.

Belongs to the GPI family.

It is found in the cytoplasm. The enzyme catalyses alpha-D-glucose 6-phosphate = beta-D-fructose 6-phosphate. It participates in carbohydrate biosynthesis; gluconeogenesis. It functions in the pathway carbohydrate degradation; glycolysis; D-glyceraldehyde 3-phosphate and glycerone phosphate from D-glucose: step 2/4. Functionally, catalyzes the reversible isomerization of glucose-6-phosphate to fructose-6-phosphate. The protein is Glucose-6-phosphate isomerase of Pseudomonas fluorescens (strain Pf0-1).